Consider the following 150-residue polypeptide: 1,4-dihydroxy-2-naphthoyl-CoA hydrolase (150 aa).

The active site involves Asp-19.

It belongs to the 4-hydroxybenzoyl-CoA thioesterase family. DHNA-CoA hydrolase subfamily.

The catalysed reaction is 1,4-dihydroxy-2-naphthoyl-CoA + H2O = 1,4-dihydroxy-2-naphthoate + CoA + H(+). The protein operates within cofactor biosynthesis; phylloquinone biosynthesis. It functions in the pathway quinol/quinone metabolism; 1,4-dihydroxy-2-naphthoate biosynthesis; 1,4-dihydroxy-2-naphthoate from chorismate: step 7/7. Its function is as follows. Catalyzes the hydrolysis of 1,4-dihydroxy-2-naphthoyl-CoA (DHNA-CoA) to 1,4-dihydroxy-2-naphthoate (DHNA), a reaction involved in phylloquinone (vitamin K1) biosynthesis. The polypeptide is 1,4-dihydroxy-2-naphthoyl-CoA hydrolase (Prochlorococcus marinus (strain AS9601)).